The primary structure comprises 146 residues: Leghemoglobin 1 (146 aa).

The region spanning 2–146 (GFTEKQEALV…LAAAIKKAMG (145 aa)) is the Globin domain. A Nitrated tyrosine modification is found at Tyr29. Ser44 lines the heme b pocket. Phosphoserine is present on Ser44. His61 is a binding site for O2. Residues Lys64, His93, and Lys96 each contribute to the heme b site. Residue Tyr134 is modified to Nitrated tyrosine.

The protein belongs to the plant globin family. As to quaternary structure, monomer. In terms of processing, nitrated in effective nodules and particularly in hypoxic conditions; this mechanism may play a protective role in the symbiosis by buffering toxic peroxynitrite NO(2)(-). Nitration level decrease during nodule senescence. Phosphorylation at Ser-44 disrupts the molecular environment of its porphyrin ring oxygen binding pocket, thus leading to a reduced oxygen consumption and to the delivery of oxygen O(2) to symbiosomes. In terms of tissue distribution, root nodules.

It localises to the cytoplasm. The protein localises to the cytosol. The protein resides in the nucleus. Leghemoglobin that reversibly binds oxygen O(2) through a pentacoordinated heme iron. In root nodules, facilitates the diffusion of oxygen to the bacteroids while preventing the bacterial nitrogenase from being inactivated by buffering dioxygen, nitric oxide and carbon monoxide, and promoting the formation of reactive oxygen species (ROS, e.g. H(2)O(2)). This role is essential for symbiotic nitrogen fixation (SNF). The sequence is that of Leghemoglobin 1 from Medicago truncatula (Barrel medic).